A 229-amino-acid polypeptide reads, in one-letter code: Ribonuclease T (229 aa).

Residues 23-197 (VIIDVETAGF…YDTERTAKLF (175 aa)) enclose the Exonuclease domain. Residues Asp26, Glu28, His184, and Asp189 each coordinate Mg(2+). His184 acts as the Proton donor/acceptor in catalysis.

Belongs to the RNase T family. In terms of assembly, homodimer. Mg(2+) is required as a cofactor.

In terms of biological role, trims short 3' overhangs of a variety of RNA species, leaving a one or two nucleotide 3' overhang. Responsible for the end-turnover of tRNA: specifically removes the terminal AMP residue from uncharged tRNA (tRNA-C-C-A). Also appears to be involved in tRNA biosynthesis. The protein is Ribonuclease T of Haemophilus influenzae (strain PittGG).